Reading from the N-terminus, the 306-residue chain is Homoserine O-acetyltransferase (306 aa).

Cys-142 (acyl-thioester intermediate) is an active-site residue. Substrate is bound by residues Lys-163 and Ser-192. His-235 (proton acceptor) is an active-site residue. The active site involves Glu-237. A substrate-binding site is contributed by Arg-249.

Belongs to the MetA family.

Its subcellular location is the cytoplasm. It catalyses the reaction L-homoserine + acetyl-CoA = O-acetyl-L-homoserine + CoA. It functions in the pathway amino-acid biosynthesis; L-methionine biosynthesis via de novo pathway; O-acetyl-L-homoserine from L-homoserine: step 1/1. Its function is as follows. Transfers an acetyl group from acetyl-CoA to L-homoserine, forming acetyl-L-homoserine. The sequence is that of Homoserine O-acetyltransferase from Brevibacillus brevis (strain 47 / JCM 6285 / NBRC 100599).